A 468-amino-acid polypeptide reads, in one-letter code: MSTRETFKISLLAKMPKDVINQFLSKDKTPFSVLFLSLLVGILAGLVGTYFEQAVHLVSETRTDWLKSEIGSFLPLWLAAFLISAFLAFIGYFLVHRFAPEAAGSGIPEIEGAMDGMRPVRWWRVLPVKFFGGMGALGSGMVLGREGPTVQMGGAVGRMISDIFRVKNEDTRHSLLAAGAAGGLAAAFNAPLAGIMFVIEEMRPQFRYTLISVRAVIISAVAANIVFRVINGQDAVITMPQYDAPELSTLGLFLLLGALFGVFGVLFNYLITLAQDLFVKFHRNDRKRYLLTGSMIGGCFGLLLLYVPELTGGGISLIPTITNGGYGAGILLLLFVGRIFTTLLCFGSGAPGGIFAPMLALGTLFGYAFGLIAKMWFPELNIEPGMFAIAGMGALFAATVRAPITGILLVIEMTNNYHLILPLIITSLGAVIFAQLLGGQPIYSQLLHRTLKNQKLQQQDLPPQSPNS.

The Cytoplasmic portion of the chain corresponds to 1 to 30 (MSTRETFKISLLAKMPKDVINQFLSKDKTP). The helical transmembrane segment at 31–67 (FSVLFLSLLVGILAGLVGTYFEQAVHLVSETRTDWLK) threads the bilayer. Over 68-74 (SEIGSFL) the chain is Periplasmic. The chain crosses the membrane as a helical span at residues 75–98 (PLWLAAFLISAFLAFIGYFLVHRF). The short motif at 104-108 (GSGIP) is the Selectivity filter part_1 element. S105 is a binding site for chloride. The helical intramembrane region spans 107–114 (IPEIEGAM). Over 115-121 (DGMRPVR) the chain is Cytoplasmic. The next 2 membrane-spanning stretches (helical) occupy residues 122–139 (WWRV…ALGS) and 146–164 (EGPT…SDIF). The Selectivity filter part_2 motif lies at 144-148 (GREGP). Over 165-174 (RVKNEDTRHS) the chain is Cytoplasmic. 2 consecutive intramembrane regions (helical) follow at residues 175–187 (LLAA…LAAA) and 191–199 (PLAGIMFVI). Residues 200–212 (EEMRPQFRYTLIS) lie on the Cytoplasmic side of the membrane. The chain crosses the membrane as a helical span at residues 213–230 (VRAVIISAVAANIVFRVI). Topologically, residues 231 to 250 (NGQDAVITMPQYDAPELSTL) are periplasmic. Residues 251–279 (GLFLLLGALFGVFGVLFNYLITLAQDLFV) traverse the membrane as a helical segment. Residues 280–285 (KFHRND) are Cytoplasmic-facing. Residues 286-307 (RKRYLLTGSMIGGCFGLLLLYV) traverse the membrane as a helical segment. Over 308-327 (PELTGGGISLIPTITNGGYG) the chain is Periplasmic. Helical transmembrane passes span 328–347 (AGIL…LCFG) and 353–374 (GIFA…LIAK). The Selectivity filter part_3 signature appears at 353–357 (GIFAP). 2 residues coordinate chloride: I354 and F355. Over 375–384 (MWFPELNIEP) the chain is Periplasmic. An intramembrane region (helical) is located at residues 385-399 (GMFAIAGMGALFAAT). Positions 400–402 (VRA) form an intramembrane region, note=Loop between two helices. An intramembrane region (helical) is located at residues 403-414 (PITGILLVIEMT). The note=Loop between two helices intramembrane region spans 415–419 (NNYHL). The helical transmembrane segment at 420 to 436 (ILPLIITSLGAVIFAQL) threads the bilayer. Residues 437 to 468 (LGGQPIYSQLLHRTLKNQKLQQQDLPPQSPNS) lie on the Cytoplasmic side of the membrane. Y443 serves as a coordination point for chloride.

Belongs to the chloride channel (TC 2.A.49) family. ClcA subfamily. Homodimer.

The protein localises to the cell inner membrane. The enzyme catalyses 2 chloride(in) + H(+)(out) = 2 chloride(out) + H(+)(in). Functionally, proton-coupled chloride transporter. Functions as antiport system and exchanges two chloride ions for 1 proton. Probably acts as an electrical shunt for an outwardly-directed proton pump that is linked to amino acid decarboxylation, as part of the extreme acid resistance (XAR) response. The sequence is that of H(+)/Cl(-) exchange transporter ClcA from Vibrio cholerae serotype O1 (strain ATCC 39315 / El Tor Inaba N16961).